The chain runs to 456 residues: RNA polymerase II-associated protein 1 homolog (456 aa).

Residues 382 to 456 (LRSVEGSLNE…PVEQLQNEED (75 aa)) form a disordered region. At S388 the chain carries Phosphoserine. Residues 396 to 406 (EEKPAESREQL) show a composition bias toward basic and acidic residues. Polar residues-rich tracts occupy residues 408-433 (SAEQ…QANS) and 441-456 (GNTQ…NEED).

Belongs to the PAF1 family.

The protein localises to the cytoplasm. It is found in the nucleus. The sequence is that of RNA polymerase II-associated protein 1 homolog from Schizosaccharomyces pombe (strain 972 / ATCC 24843) (Fission yeast).